A 198-amino-acid polypeptide reads, in one-letter code: Recombination protein RecR (198 aa).

The C4-type zinc finger occupies 57 to 72; the sequence is CSVCGHITDQDPCAIC. One can recognise a Toprim domain in the interval 80-175; sequence SLICVVQDPK…RTTRIAHGLP (96 aa).

This sequence belongs to the RecR family.

Its function is as follows. May play a role in DNA repair. It seems to be involved in an RecBC-independent recombinational process of DNA repair. It may act with RecF and RecO. This is Recombination protein RecR from Oceanobacillus iheyensis (strain DSM 14371 / CIP 107618 / JCM 11309 / KCTC 3954 / HTE831).